A 148-amino-acid chain; its full sequence is Large ribosomal subunit protein bL9 (148 aa).

It belongs to the bacterial ribosomal protein bL9 family.

Binds to the 23S rRNA. This chain is Large ribosomal subunit protein bL9, found in Pseudomonas syringae pv. tomato (strain ATCC BAA-871 / DC3000).